Here is an 807-residue protein sequence, read N- to C-terminus: Glycerol-3-phosphate acyltransferase (807 aa).

The HXXXXD motif motif lies at 308–313 (CHRSHM).

It belongs to the GPAT/DAPAT family.

The protein localises to the cell inner membrane. It catalyses the reaction sn-glycerol 3-phosphate + an acyl-CoA = a 1-acyl-sn-glycero-3-phosphate + CoA. The protein operates within phospholipid metabolism; CDP-diacylglycerol biosynthesis; CDP-diacylglycerol from sn-glycerol 3-phosphate: step 1/3. The chain is Glycerol-3-phosphate acyltransferase from Shewanella pealeana (strain ATCC 700345 / ANG-SQ1).